Reading from the N-terminus, the 161-residue chain is Small ribosomal subunit protein uS9 (161 aa).

Positions 1-21 (MATLQSLADLNRANTQTSNPE) are enriched in polar residues. Residues 1 to 25 (MATLQSLADLNRANTQTSNPENEAP) are disordered.

Belongs to the universal ribosomal protein uS9 family.

The polypeptide is Small ribosomal subunit protein uS9 (Methylorubrum extorquens (strain CM4 / NCIMB 13688) (Methylobacterium extorquens)).